We begin with the raw amino-acid sequence, 385 residues long: 1-deoxy-D-xylulose 5-phosphate reductoisomerase (385 aa).

Positions 10, 11, 12, 13, 37, and 124 each coordinate NADPH. 1-deoxy-D-xylulose 5-phosphate is bound at residue K125. E126 lines the NADPH pocket. D150 lines the Mn(2+) pocket. 4 residues coordinate 1-deoxy-D-xylulose 5-phosphate: S151, E152, S176, and H199. E152 lines the Mn(2+) pocket. G205 contributes to the NADPH binding site. 1-deoxy-D-xylulose 5-phosphate-binding residues include S212, N217, K218, and E221. Residue E221 participates in Mn(2+) binding.

This sequence belongs to the DXR family. Mg(2+) is required as a cofactor. Mn(2+) serves as cofactor.

It carries out the reaction 2-C-methyl-D-erythritol 4-phosphate + NADP(+) = 1-deoxy-D-xylulose 5-phosphate + NADPH + H(+). Its pathway is isoprenoid biosynthesis; isopentenyl diphosphate biosynthesis via DXP pathway; isopentenyl diphosphate from 1-deoxy-D-xylulose 5-phosphate: step 1/6. Functionally, catalyzes the NADPH-dependent rearrangement and reduction of 1-deoxy-D-xylulose-5-phosphate (DXP) to 2-C-methyl-D-erythritol 4-phosphate (MEP). The sequence is that of 1-deoxy-D-xylulose 5-phosphate reductoisomerase from Clostridium botulinum (strain Okra / Type B1).